Consider the following 508-residue polypeptide: UDP-N-acetylmuramoyl-L-alanyl-D-glutamate--2,6-diaminopimelate ligase (508 aa).

Ser-33 contributes to the UDP-N-acetyl-alpha-D-muramoyl-L-alanyl-D-glutamate binding site. Residue Gly-121–Thr-127 coordinates ATP. UDP-N-acetyl-alpha-D-muramoyl-L-alanyl-D-glutamate contacts are provided by residues Asn-162, Thr-163–Thr-164, Ser-190, Gln-196, and Arg-198. Residue Lys-230 is modified to N6-carboxylysine. Meso-2,6-diaminopimelate is bound by residues Arg-399, Asp-423–Arg-426, Gly-474, and Glu-478. Positions Asp-423–Arg-426 match the Meso-diaminopimelate recognition motif motif.

It belongs to the MurCDEF family. MurE subfamily. Mg(2+) serves as cofactor. Carboxylation is probably crucial for Mg(2+) binding and, consequently, for the gamma-phosphate positioning of ATP.

The protein resides in the cytoplasm. The enzyme catalyses UDP-N-acetyl-alpha-D-muramoyl-L-alanyl-D-glutamate + meso-2,6-diaminopimelate + ATP = UDP-N-acetyl-alpha-D-muramoyl-L-alanyl-gamma-D-glutamyl-meso-2,6-diaminopimelate + ADP + phosphate + H(+). It functions in the pathway cell wall biogenesis; peptidoglycan biosynthesis. Functionally, catalyzes the addition of meso-diaminopimelic acid to the nucleotide precursor UDP-N-acetylmuramoyl-L-alanyl-D-glutamate (UMAG) in the biosynthesis of bacterial cell-wall peptidoglycan. In Buchnera aphidicola subsp. Baizongia pistaciae (strain Bp), this protein is UDP-N-acetylmuramoyl-L-alanyl-D-glutamate--2,6-diaminopimelate ligase.